A 545-amino-acid chain; its full sequence is T-complex protein 1 subunit gamma (545 aa).

Position 1 is an N-acetylmethionine (methionine 1). Residues 1 to 24 (MMGHRPVLVLSQNTKRESGRKVQS) are disordered. The residue at position 11 (serine 11) is a Phosphoserine. Lysine 15 participates in a covalent cross-link: Glycyl lysine isopeptide (Lys-Gly) (interchain with G-Cter in SUMO2). An ADP-binding site is contributed by glycine 42. Glycine 42 is a binding site for ATP. Position 93 (aspartate 93) interacts with Mg(2+). Glycine 94, threonine 95, threonine 96, serine 97, threonine 162, and lysine 163 together coordinate ADP. 3 residues coordinate ATP: glycine 94, threonine 95, and threonine 96. Serine 170 carries the post-translational modification Phosphoserine. Lysine 222 carries the post-translational modification N6-acetyllysine. Residues serine 243 and serine 244 each carry the phosphoserine modification. At tyrosine 247 the chain carries Phosphotyrosine. Glycyl lysine isopeptide (Lys-Gly) (interchain with G-Cter in SUMO2) cross-links involve residues lysine 248 and lysine 249. Serine 252 is subject to Phosphoserine. A disulfide bridge links cysteine 366 with cysteine 372. A Glycyl lysine isopeptide (Lys-Gly) (interchain with G-Cter in SUMO2) cross-link involves residue lysine 381. Glycine 411 is an ADP binding site. Glycine 411 provides a ligand contact to ATP. Phosphothreonine occurs at positions 430 and 459. ADP-binding residues include glycine 482, glutamate 483, glutamate 497, and lysine 502. Glycine 482 contributes to the ATP binding site. Glutamate 497 contacts ATP. A disordered region spans residues 526–545 (HKKKGDDQSRQGGAPDAGQE).

This sequence belongs to the TCP-1 chaperonin family. In terms of assembly, component of the chaperonin-containing T-complex (TRiC), a hexadecamer composed of two identical back-to-back stacked rings enclosing a protein folding chamber. Each ring is made up of eight different subunits: TCP1/CCT1, CCT2, CCT3, CCT4, CCT5, CCT6A/CCT6, CCT7, CCT8. Interacts with PACRG. Interacts with DNAAF4. Interacts with DLEC1.

Its subcellular location is the cytoplasm. It carries out the reaction ATP + H2O = ADP + phosphate + H(+). In terms of biological role, component of the chaperonin-containing T-complex (TRiC), a molecular chaperone complex that assists the folding of actin, tubulin and other proteins upon ATP hydrolysis. The TRiC complex mediates the folding of WRAP53/TCAB1, thereby regulating telomere maintenance. As part of the TRiC complex may play a role in the assembly of BBSome, a complex involved in ciliogenesis regulating transports vesicles to the cilia. The sequence is that of T-complex protein 1 subunit gamma (CCT3) from Bos taurus (Bovine).